A 233-amino-acid polypeptide reads, in one-letter code: Large ribosomal subunit protein bL19c (233 aa).

The N-terminal 77 residues, 1 to 77 (MASKVLPQAL…FPARNSFVVR (77 aa)), are a transit peptide targeting the chloroplast.

In terms of assembly, component of the chloroplast large ribosomal subunit (LSU). Mature 70S chloroplast ribosomes of higher plants consist of a small (30S) and a large (50S) subunit. The 30S small subunit contains 1 molecule of ribosomal RNA (16S rRNA) and 24 different proteins. The 50S large subunit contains 3 rRNA molecules (23S, 5S and 4.5S rRNA) and 33 different proteins.

The protein localises to the plastid. The protein resides in the chloroplast. Component of the chloroplast ribosome (chloro-ribosome), a dedicated translation machinery responsible for the synthesis of chloroplast genome-encoded proteins, including proteins of the transcription and translation machinery and components of the photosynthetic apparatus. The sequence is that of Large ribosomal subunit protein bL19c (RPL19) from Spinacia oleracea (Spinach).